The primary structure comprises 444 residues: Xylose isomerase (444 aa).

Catalysis depends on residues His-101 and Asp-104. Residues Glu-232, Glu-268, His-271, Asp-296, Asp-307, Asp-309, and Asp-339 each contribute to the Mg(2+) site.

This sequence belongs to the xylose isomerase family. As to quaternary structure, homotetramer. The cofactor is Mg(2+).

It localises to the cytoplasm. It catalyses the reaction alpha-D-xylose = alpha-D-xylulofuranose. This is Xylose isomerase from Thermotoga maritima (strain ATCC 43589 / DSM 3109 / JCM 10099 / NBRC 100826 / MSB8).